Here is a 287-residue protein sequence, read N- to C-terminus: Pyridoxal kinase PdxY (287 aa).

Substrate-binding positions include serine 10 and 45-46; that span reads TQ. ATP contacts are provided by residues aspartate 112, alanine 144, glutamate 149, lysine 182, and 209–212; that span reads RPLV. A substrate-binding site is contributed by aspartate 224.

This sequence belongs to the pyridoxine kinase family. PdxY subfamily. In terms of assembly, homodimer. Mg(2+) is required as a cofactor.

The enzyme catalyses pyridoxal + ATP = pyridoxal 5'-phosphate + ADP + H(+). The protein operates within cofactor metabolism; pyridoxal 5'-phosphate salvage; pyridoxal 5'-phosphate from pyridoxal: step 1/1. Pyridoxal kinase involved in the salvage pathway of pyridoxal 5'-phosphate (PLP). Catalyzes the phosphorylation of pyridoxal to PLP. This chain is Pyridoxal kinase PdxY, found in Shigella sonnei (strain Ss046).